Here is a 488-residue protein sequence, read N- to C-terminus: Envelope glycoprotein gp62 (488 aa).

An N-terminal signal peptide occupies residues 1–20; the sequence is MGKFLATLILFFQFCPLILG. Residues 21–442 are Extracellular-facing; sequence DYSPSCCTLT…LGLSQWAREA (422 aa). N-linked (GlcNAc...) asparagine; by host glycosylation is found at Asn-140 and Asn-222. The CXXC motif lies at 225 to 228; that stretch reads CIVC. Cystine bridges form between Cys-225/Cys-228, Cys-225/Cys-401, and Cys-393/Cys-400. Residues Asn-244 and Asn-272 are each glycosylated (N-linked (GlcNAc...) asparagine; by host). The tract at residues 313-333 is fusion peptide; that stretch reads AVPVAVWLVSALAMGAGVAGG. Residues 327 to 339 form a gly-rich region; it reads GAGVAGGITGSMS. 2 coiled-coil regions span residues 340–385 and 397–429; these read LASG…LDLL and QEQC…GWGL. Residues 376 to 392 are immunosuppression; sequence AQNRRGLDLLFWEQGGL. The CX6CC motif lies at 393-401; sequence CKALQEQCC. Asn-404 carries N-linked (GlcNAc...) asparagine; by host glycosylation. Residues 443-463 form a helical membrane-spanning segment; that stretch reads LQTGITLVALLLLVILAGPCI. Residue Cys-462 is the site of S-palmitoyl cysteine; by host attachment. Residues 464 to 488 lie on the Cytoplasmic side of the membrane; it reads LRQLRHLPSRVRYPHYSLINPESSL.

In terms of assembly, the mature envelope protein (Env) consists of a trimer of SU-TM heterodimers attached by a labile interchain disulfide bond. Post-translationally, specific enzymatic cleavages in vivo yield mature proteins. Envelope glycoproteins are synthesized as an inactive precursor that is N-glycosylated and processed likely by host cell furin or by a furin-like protease in the Golgi to yield the mature SU and TM proteins. The cleavage site between SU and TM requires the minimal sequence [KR]-X-[KR]-R. The CXXC motif is highly conserved across a broad range of retroviral envelope proteins. It is thought to participate in the formation of a labile disulfide bond possibly with the CX6CC motif present in the transmembrane protein. Isomerization of the intersubunit disulfide bond to an SU intrachain disulfide bond is thought to occur upon receptor recognition in order to allow membrane fusion. In terms of processing, the transmembrane protein is palmitoylated.

It localises to the virion membrane. It is found in the host cell membrane. The surface protein (SU) attaches the virus to the host cell by binding to its receptor. This interaction triggers the refolding of the transmembrane protein (TM) and is thought to activate its fusogenic potential by unmasking its fusion peptide. Fusion occurs at the host cell plasma membrane. Functionally, the transmembrane protein (TM) acts as a class I viral fusion protein. Under the current model, the protein has at least 3 conformational states: pre-fusion native state, pre-hairpin intermediate state, and post-fusion hairpin state. During viral and target cell membrane fusion, the coiled coil regions (heptad repeats) assume a trimer-of-hairpins structure, positioning the fusion peptide in close proximity to the C-terminal region of the ectodomain. The formation of this structure appears to drive apposition and subsequent fusion of viral and target cell membranes. Membranes fusion leads to delivery of the nucleocapsid into the cytoplasm. The sequence is that of Envelope glycoprotein gp62 (env) from Human T-cell leukemia virus 1 (strain Japan MT-2 subtype A) (HTLV-1).